A 590-amino-acid chain; its full sequence is MSVVEEATDDALYPIAVLIDELRNEDVTLRLNSIRKLSTIALALGVERTRNELIQFLTDTIYDEDEVLLVLAEQLGNFTPLVGGPDHVHCLLLPLENLATVEETVVRDKAVESLRKIADKHSSASLEEHFVPMLRRLATGDWFTSRTSACGLFSVVYPRVSPAIKSELKSMFRTLCRDDTPMVRRAAAAKLGEFAKVFEKTAVIEGLHSSLTDLHVDEQDSVRLLTVESAIAFGTLLDKANKKKLIEPILIELFDDKSWRVRYMVAEKLIEIQNVLGEDMDTTHLVNMYTNLLKDPEGEVRCAATQRLQEFALNLPEDKRQNIICNSLLNVAKELVTDGNQLVKSELAGVIMGLAPLIGKEQTVSELLPIYMQLLNDQTPEVRLNIISSLDKVNEVIGAAQLSTSLLPAIVGLAEDGKWRVRLAIVQFMPLLASQLGQEFFDEKLLPLCLNWLTDHVFSIREASTLIMKELTQKFGGQWASTNIVPKMQKLQKDTNYLQRMTCLFCLNTLSEAMTQEQILKEIMPIVKDLVEDDVPNVRFNAAKSLKRIGKNLTPSTLTSEVKPLLEKLGKDSDFDVRYFSEEAKNSLGL.

HEAT repeat units lie at residues 37-73 (LSTI…VLAE), 74-111 (QLGN…DKAV), 113-150 (SLRK…TSAC), 151-188 (GLFS…RAAA), 189-227 (AKLG…LLTV), 228-266 (ESAI…YMVA), 267-305 (EKLI…CAAT), 306-344 (QRLQ…QLVK), 349-387 (GVIM…LNII), 388-426 (SSLD…LAIV), 427-465 (QFMP…EAST), 466-504 (LIMK…MTCL), 505-543 (FCLN…FNAA), and 544-582 (KSLK…YFSE).

Belongs to the phosphatase 2A regulatory subunit A family. In terms of assembly, part of a complex consisting of a common heterodimeric core enzyme, composed of catalytic subunit let-92 and constant regulatory subunit paa-1, that associates with a variety of regulatory subunits which confer distinct properties to the holoenzyme. Interacts with rsa-1.

It localises to the cytoplasm. The protein resides in the cytoskeleton. The protein localises to the microtubule organizing center. It is found in the centrosome. Its subcellular location is the spindle. Functionally, acts as a scaffolding protein for phosphatase let-92 and its regulatory subunits. Probably together with let-92 and regulatory subunit sur-6, regulates centriole duplication, microtubule outgrowth and mitotic spindle stability during early embryonic cell division by preventing the degradation of sas-5 and kinase zyg-1. During vulva development, may play a role with phosphatase let-92 and regulatory subunit sur-6 in the induction of vulva cell precursors by positively regulating let-60/Ras-MAP kinase signaling, probably by promoting lin-45 activation. Plays a positive role in axon guidance probably by inhibiting phosphatase let-92. In Caenorhabditis elegans, this protein is Probable serine/threonine-protein phosphatase PP2A regulatory subunit (paa-1).